The chain runs to 89 residues: Small ribosomal subunit protein uS15 (89 aa).

The protein belongs to the universal ribosomal protein uS15 family. As to quaternary structure, part of the 30S ribosomal subunit. Forms a bridge to the 50S subunit in the 70S ribosome, contacting the 23S rRNA.

One of the primary rRNA binding proteins, it binds directly to 16S rRNA where it helps nucleate assembly of the platform of the 30S subunit by binding and bridging several RNA helices of the 16S rRNA. In terms of biological role, forms an intersubunit bridge (bridge B4) with the 23S rRNA of the 50S subunit in the ribosome. This Treponema denticola (strain ATCC 35405 / DSM 14222 / CIP 103919 / JCM 8153 / KCTC 15104) protein is Small ribosomal subunit protein uS15.